The chain runs to 128 residues: MAWYQGNDLRKPTGGKKTRHRKKRKHELGRPPTMTRFSVKEAQKIIRVRGGNLKIRLKRAVYVNVAVPNEGKVTKTRILEVVETPSNPQYARGNYITKGTIVRTELGLVKITSRPGQDGVLNGILLEK.

Residues 1–31 (MAWYQGNDLRKPTGGKKTRHRKKRKHELGRP) form a disordered region. The segment covering 13–27 (TGGKKTRHRKKRKHE) has biased composition (basic residues).

The protein belongs to the eukaryotic ribosomal protein eS8 family. Part of the 30S ribosomal subunit.

In Staphylothermus marinus (strain ATCC 43588 / DSM 3639 / JCM 9404 / F1), this protein is Small ribosomal subunit protein eS8.